We begin with the raw amino-acid sequence, 419 residues long: UDP-N-acetylglucosamine 1-carboxyvinyltransferase (419 aa).

22–23 provides a ligand contact to phosphoenolpyruvate; it reads KN. A UDP-N-acetyl-alpha-D-glucosamine-binding site is contributed by Arg-91. Cys-115 acts as the Proton donor in catalysis. Cys-115 is subject to 2-(S-cysteinyl)pyruvic acid O-phosphothioketal. UDP-N-acetyl-alpha-D-glucosamine-binding positions include 120–124, 160–163, Asp-305, and Val-327; these read RPVDL and KVSV.

Belongs to the EPSP synthase family. MurA subfamily.

The protein resides in the cytoplasm. It catalyses the reaction phosphoenolpyruvate + UDP-N-acetyl-alpha-D-glucosamine = UDP-N-acetyl-3-O-(1-carboxyvinyl)-alpha-D-glucosamine + phosphate. It participates in cell wall biogenesis; peptidoglycan biosynthesis. In terms of biological role, cell wall formation. Adds enolpyruvyl to UDP-N-acetylglucosamine. The chain is UDP-N-acetylglucosamine 1-carboxyvinyltransferase from Escherichia coli O157:H7.